A 161-amino-acid chain; its full sequence is Nucleotide-binding protein Csal_2524 (161 aa).

The protein belongs to the YajQ family.

In terms of biological role, nucleotide-binding protein. The sequence is that of Nucleotide-binding protein Csal_2524 from Chromohalobacter salexigens (strain ATCC BAA-138 / DSM 3043 / CIP 106854 / NCIMB 13768 / 1H11).